Consider the following 945-residue polypeptide: Leucine--tRNA ligase (945 aa).

Residues 43–53 (PYPNGAIHIGH) carry the 'HIGH' region motif. Residues 638-642 (KMSKS) carry the 'KMSKS' region motif. Lysine 641 provides a ligand contact to ATP.

It belongs to the class-I aminoacyl-tRNA synthetase family.

It localises to the cytoplasm. The catalysed reaction is tRNA(Leu) + L-leucine + ATP = L-leucyl-tRNA(Leu) + AMP + diphosphate. The sequence is that of Leucine--tRNA ligase from Pyrobaculum neutrophilum (strain DSM 2338 / JCM 9278 / NBRC 100436 / V24Sta) (Thermoproteus neutrophilus).